The sequence spans 403 residues: Heptahelical transmembrane protein ADIPOR3 (403 aa).

Residues 1–73 (MAAAAGEEVE…LSAFSIHNET (73 aa)) lie on the Cytoplasmic side of the membrane. The chain crosses the membrane as a helical span at residues 74–94 (LNVWTHLIGFFIFLVLTIYTA). The Extracellular segment spans residues 95–209 (TQVPNVVDLQ…QLIRPIPRWP (115 aa)). Residues 210-230 (FYAFLGGAMFCLLASSTCHLL) traverse the membrane as a helical segment. Residues 231–246 (SCHSRRLAYIMLRLDY) are Cytoplasmic-facing. Residues 247 to 267 (AGIAALIATSFYPPVYYSFMC) form a helical membrane-spanning segment. Topologically, residues 268–274 (YPFFCNL) are extracellular. The helical transmembrane segment at 275 to 295 (YLSCITILGVATIAFSLLPVF) threads the bilayer. At 296–306 (QNPEFRTIRAC) the chain is on the cytoplasmic side. The chain crosses the membrane as a helical span at residues 307 to 327 (LFFGMGASGVIPVIHKLILFW). Residues 328 to 331 (HQPE) are Extracellular-facing. A helical transmembrane segment spans residues 332–352 (ALHTTAYEVLMGLFYGIGALV). Residues 353–374 (YATRVPERWMPGKFDIAGHSHQ) lie on the Cytoplasmic side of the membrane. The helical transmembrane segment at 375 to 395 (LFHVLVVAGAYTHYHSGLVYL) threads the bilayer. Over 396-403 (KWRDVQGC) the chain is Extracellular.

Belongs to the ADIPOR family.

It is found in the membrane. Functionally, may play a role in abiotic stress response. The polypeptide is Heptahelical transmembrane protein ADIPOR3 (ADIPOR3) (Oryza sativa subsp. japonica (Rice)).